The primary structure comprises 704 residues: DNA-directed DNA polymerase (704 aa).

The tract at residues 1 to 187 is 3'-5'exonuclease; it reads MIVSDIEANA…TKALLEKLLS (187 aa). Residues Asp5, Glu7, and Asp174 each coordinate Mg(2+). The segment at 202 to 704 is polymerase; sequence GYTTFWSESL…KMGPNWAICH (503 aa). The binding to host TrxA stretch occupies residues 262-338; the sequence is GSWYQPKGGT…VEHVVFNPSS (77 aa). The Mg(2+) site is built by Asp475 and Ala476. 4 residues coordinate substrate: His506, Arg518, Lys522, and Tyr526. Position 654 (Asp654) interacts with Mg(2+).

It belongs to the DNA polymerase type-A family. In terms of assembly, composed of two subunits. One is encoded by the phage and the other is encoded by the host thioredoxin. Interacts with DNA primase/helicase; this interaction is essential for the coordination of DNA unwinding and nucleotide polymerization on duplex DNA. Interacts with the ssDNA-binding protein. Part of the replicase complex that includes the DNA polymerase, thioredoxin, the primase/helicase and the single-stranded DNA binding protein. The cofactor is Mg(2+).

The catalysed reaction is DNA(n) + a 2'-deoxyribonucleoside 5'-triphosphate = DNA(n+1) + diphosphate. Replicates viral genomic DNA. This polymerase possesses two enzymatic activities: DNA synthesis (polymerase) and an exonucleolytic activity that degrades single-stranded DNA in the 3'-5' direction. Non-processive DNA polymerase that achieves processivity by binding to host thioredoxin (TrxA). This interaction increases the rate of dNTP incorporation to yield a processivity of approximately 800 nucleotides (nt) per binding event. Interacts with DNA helicase gp4 to coordinate nucleotide polymerization with unwinding of the DNA. The leading strand is synthesized continuously while synthesis of the lagging strand requires the synthesis of oligoribonucleotides by the primase domain of gp4. The sequence is that of DNA-directed DNA polymerase from Escherichia phage T7 (Bacteriophage T7).